A 264-amino-acid chain; its full sequence is 3-methyl-2-oxobutanoate hydroxymethyltransferase (264 aa).

2 residues coordinate Mg(2+): D45 and D84. 3-methyl-2-oxobutanoate contacts are provided by residues 45–46, D84, and K112; that span reads DS. E114 contacts Mg(2+). E181 acts as the Proton acceptor in catalysis.

This sequence belongs to the PanB family. Homodecamer; pentamer of dimers. It depends on Mg(2+) as a cofactor.

Its subcellular location is the cytoplasm. It carries out the reaction 3-methyl-2-oxobutanoate + (6R)-5,10-methylene-5,6,7,8-tetrahydrofolate + H2O = 2-dehydropantoate + (6S)-5,6,7,8-tetrahydrofolate. It participates in cofactor biosynthesis; (R)-pantothenate biosynthesis; (R)-pantoate from 3-methyl-2-oxobutanoate: step 1/2. Catalyzes the reversible reaction in which hydroxymethyl group from 5,10-methylenetetrahydrofolate is transferred onto alpha-ketoisovalerate to form ketopantoate. In Escherichia coli (strain 55989 / EAEC), this protein is 3-methyl-2-oxobutanoate hydroxymethyltransferase.